The primary structure comprises 212 residues: Large ribosomal subunit protein uL4 (212 aa).

Residues R45 to G71 are disordered. Residues G60–G71 are compositionally biased toward basic residues.

This sequence belongs to the universal ribosomal protein uL4 family. In terms of assembly, part of the 50S ribosomal subunit.

Functionally, one of the primary rRNA binding proteins, this protein initially binds near the 5'-end of the 23S rRNA. It is important during the early stages of 50S assembly. It makes multiple contacts with different domains of the 23S rRNA in the assembled 50S subunit and ribosome. Forms part of the polypeptide exit tunnel. The protein is Large ribosomal subunit protein uL4 of Nostoc punctiforme (strain ATCC 29133 / PCC 73102).